Here is a 448-residue protein sequence, read N- to C-terminus: MQFQTIAAIATPLGTAGISVIRVSGDEAISKVNQIFKGKNLNKVKSHTIHYGHILNEDGSILDEVMISVFIAPKSFTKEDVVEISTHGGILITQKVLERILETGIELAQPGEFSKRAFLNGRIDLVQAEAIMDIIHATNENAIKVANKALNKATSSMIDNLKSKVLTLIAQIEVNIDYPEYDDAIIMSKELIYPRVNDLLDEINDILTKSKRTQYIREGVKTVIVGRPNVGKSSLLNALLNEERAIVSDIAGTTRDTIDAFVNLDGVTLQLIDTAGIRDALDTIEKIGVDRSRKAIHEAELVLLVLDLSQKLTKEDEMLLTLTEHKNRIIIGNKKDLPSYLEIDTNVQISTLEKEGLSVLESEILKTLKLDNLVDKDFNYLSNVRHIQKLKEAKTSLESVINAIHHDMPVDIYAVDLTTAWNRLGEILGNHQYGDLLTELFSKFCLGK.

Residues Arg22, Glu83, and Arg122 each contribute to the (6S)-5-formyl-5,6,7,8-tetrahydrofolate site. Residues 219–369 (GVKTVIVGRP…LESEILKTLK (151 aa)) enclose the TrmE-type G domain. Asn229 lines the K(+) pocket. GTP-binding positions include 229-234 (NVGKSS), 248-254 (SDIAGTT), and 273-276 (DTAG). Residue Ser233 coordinates Mg(2+). K(+) contacts are provided by Ser248, Ile250, and Thr253. A Mg(2+)-binding site is contributed by Thr254. (6S)-5-formyl-5,6,7,8-tetrahydrofolate is bound at residue Lys448.

The protein belongs to the TRAFAC class TrmE-Era-EngA-EngB-Septin-like GTPase superfamily. TrmE GTPase family. As to quaternary structure, homodimer. Heterotetramer of two MnmE and two MnmG subunits. It depends on K(+) as a cofactor.

It localises to the cytoplasm. Its function is as follows. Exhibits a very high intrinsic GTPase hydrolysis rate. Involved in the addition of a carboxymethylaminomethyl (cmnm) group at the wobble position (U34) of certain tRNAs, forming tRNA-cmnm(5)s(2)U34. This Acholeplasma laidlawii (strain PG-8A) protein is tRNA modification GTPase MnmE.